The sequence spans 201 residues: Translation initiation factor IF-3 (201 aa).

The disordered stretch occupies residues 170-201 (TPKSASKKGHTPPKTQVEASKQANESAETEEE). Polar residues predominate over residues 182-195 (PKTQVEASKQANES).

The protein belongs to the IF-3 family. Monomer.

It is found in the cytoplasm. In terms of biological role, IF-3 binds to the 30S ribosomal subunit and shifts the equilibrium between 70S ribosomes and their 50S and 30S subunits in favor of the free subunits, thus enhancing the availability of 30S subunits on which protein synthesis initiation begins. The protein is Translation initiation factor IF-3 of Porphyromonas gingivalis (strain ATCC BAA-308 / W83).